Reading from the N-terminus, the 139-residue chain is Probable transcription termination protein NusA (139 aa).

Residues 97–139 (STVAYAEVDRADTGVAIGRDGETIETARRLAERQFDIDDIELA) enclose the KH domain.

It belongs to the NusA family.

It localises to the cytoplasm. In terms of biological role, participates in transcription termination. This Halococcus morrhuae (Micrococcus morrhuae) protein is Probable transcription termination protein NusA.